We begin with the raw amino-acid sequence, 161 residues long: Prs ADP-ribosylating toxin (161 aa).

The protein belongs to the MbcT/ParT/Res family. In terms of assembly, homodimer, forms heterotetrameric ParS(2)-ParT(2) complexes. Post-translationally, consumes NAD(+) and auto-ADP-ribosylates on the tryptic fragment Ala-47-Arg-66 in vitro. Also auto-ADP-ribosylates using NADP(+).

In terms of biological role, toxic component of a type II toxin-antitoxin (TA) system. Expression in E.coli inhibits cell growth; bacteriostasis is neutralized by expression of cognate antitoxin ParS. ADP-ribosylates E.coli ribose-phosphate pyrophosphokinase (RPPK, prs) using NAD(+) in vitro; ADP-ribosylates RPPK on 'Lys-182' and 'Ser-202'. Cannot use NADP(+). Also auto-ADP-ribosylates in vitro; in the presence of RPPK auto-ADP-ribosylation decreases. This Sphingobium sp. (strain YBL2) protein is Prs ADP-ribosylating toxin.